Reading from the N-terminus, the 620-residue chain is Notoamide biosynthesis transcriptional activator notL' (620 aa).

The interval 1-26 is disordered; it reads MPPSSKSRRLPPAASDSAASDAQKRR. Positions 33–59 form a DNA-binding region, zn(2)-C6 fungal-type; sequence CSACKARKLKCTGAPPCANCVKSRIEC. Residues 591 to 620 are disordered; the sequence is ETGAFFLDPDQPSGNSTPIKSETPEGTAIS.

The protein localises to the nucleus. Its function is as follows. Transcription factor that probably regulates the expression of the gene cluster that mediates the biosynthesis of notoamide, a fungal indole alkaloid that belongs to a family of natural products containing a characteristic bicyclo[2.2.2]diazaoctane core. This is Notoamide biosynthesis transcriptional activator notL' from Aspergillus versicolor.